A 1344-amino-acid chain; its full sequence is Regulatory-associated protein of TOR 1 (1344 aa).

Residues 28-44 are compositionally biased toward basic and acidic residues; the sequence is CVSSHDDGDSRRKDSEA. 2 disordered regions span residues 28–56 and 771–818; these read CVSS…GTTE and ASTD…DSVS. Residues 785–816 are compositionally biased toward low complexity; that stretch reads SSSPLGSSGLMQGSPLSDDSSLHSDSGMMHDS. WD repeat units lie at residues 1025-1064, 1070-1111, 1125-1164, 1168-1208, 1214-1255, 1259-1298, and 1307-1344; these read RFET…LLNG, FPDK…GKQK, GARD…LVRS, ESEC…PLVC, QKVE…DTYL, AHRG…LGII, and QKIG…SQAR.

This sequence belongs to the WD repeat RAPTOR family. Interacts with TOR, ATPK1 and ML1. Interacts with KIN10. Phosphorylated by KIN10. Expressed in roots, leaves, flowers and seeds.

It is found in the cytoplasm. In terms of biological role, probable component of the plant TOR kinase pathway that recruits substrates for TOR. Modulates plant cell growth and regulates the activity of ATPK1 kinase in response to osmotic stress. The polypeptide is Regulatory-associated protein of TOR 1 (RAPTOR1) (Arabidopsis thaliana (Mouse-ear cress)).